A 216-amino-acid polypeptide reads, in one-letter code: ADP-ribosylation factor D (216 aa).

A compositionally biased stretch (low complexity) spans serine 188–glutamine 204. The disordered stretch occupies residues serine 188–threonine 216. Over residues proline 205–threonine 216 the composition is skewed to polar residues.

Belongs to the small GTPase superfamily. Arf family.

The protein resides in the golgi apparatus. GTP-binding protein involved in protein trafficking; may modulate vesicle budding and uncoating within the Golgi apparatus. The chain is ADP-ribosylation factor D (arrD) from Dictyostelium discoideum (Social amoeba).